The chain runs to 282 residues: Glutamate racemase (282 aa).

Residues 13–14 (DS) and 45–46 (YG) each bind substrate. C76 serves as the catalytic Proton donor/acceptor. Substrate is bound at residue 77 to 78 (NT). The Proton donor/acceptor role is filled by C186. 187-188 (TH) contributes to the substrate binding site.

This sequence belongs to the aspartate/glutamate racemases family.

The catalysed reaction is L-glutamate = D-glutamate. Its pathway is cell wall biogenesis; peptidoglycan biosynthesis. Provides the (R)-glutamate required for cell wall biosynthesis. The protein is Glutamate racemase of Ralstonia pickettii (strain 12J).